The sequence spans 321 residues: Outer envelope protein 36, chloroplastic (321 aa).

It belongs to the OEP80 (TC 1.B.33.2) family. As to expression, expressed in germinating seeds.

The protein localises to the plastid. Its subcellular location is the chloroplast outer membrane. In terms of biological role, may play a role during plastid development. The protein is Outer envelope protein 36, chloroplastic of Arabidopsis thaliana (Mouse-ear cress).